We begin with the raw amino-acid sequence, 497 residues long: Cytochrome P450 monooxygenase 151 (497 aa).

A helical membrane pass occupies residues 1 to 21; the sequence is MTDLVPVYYAFAGVVAALLFY. N-linked (GlcNAc...) asparagine glycans are attached at residues Asn-292 and Asn-397. Residue Cys-441 coordinates heme.

It belongs to the cytochrome P450 family. The cofactor is heme.

It is found in the membrane. It participates in secondary metabolite biosynthesis. Functionally, cytochrome P450 monooxygenase that is able to use dehydroabietic acid and testosterone as substrates for oxidation, suggesting that the natural substrate(s) may be structurally related to steroid compounds. In Postia placenta (strain ATCC 44394 / Madison 698-R) (Brown rot fungus), this protein is Cytochrome P450 monooxygenase 151.